A 249-amino-acid polypeptide reads, in one-letter code: uncharacterized protein (249 aa).

The N-terminal stretch at 1-20 is a signal peptide; that stretch reads MSNQNKVLSLGLLLLAAVAA.

Belongs to the IIV-6 117L family.

This is an uncharacterized protein from Acheta domesticus (House cricket).